We begin with the raw amino-acid sequence, 318 residues long: 4-hydroxy-3-methylbut-2-enyl diphosphate reductase (318 aa).

A [4Fe-4S] cluster-binding site is contributed by C12. The (2E)-4-hydroxy-3-methylbut-2-enyl diphosphate site is built by H41 and H74. Residues H41 and H74 each coordinate dimethylallyl diphosphate. 2 residues coordinate isopentenyl diphosphate: H41 and H74. Residue C96 coordinates [4Fe-4S] cluster. Residue H124 participates in (2E)-4-hydroxy-3-methylbut-2-enyl diphosphate binding. A dimethylallyl diphosphate-binding site is contributed by H124. H124 contributes to the isopentenyl diphosphate binding site. The active-site Proton donor is the E126. T167 serves as a coordination point for (2E)-4-hydroxy-3-methylbut-2-enyl diphosphate. Position 197 (C197) interacts with [4Fe-4S] cluster. (2E)-4-hydroxy-3-methylbut-2-enyl diphosphate-binding residues include S225, S226, N227, and S269. Residues S225, S226, N227, and S269 each contribute to the dimethylallyl diphosphate site. 4 residues coordinate isopentenyl diphosphate: S225, S226, N227, and S269.

This sequence belongs to the IspH family. The cofactor is [4Fe-4S] cluster.

It carries out the reaction isopentenyl diphosphate + 2 oxidized [2Fe-2S]-[ferredoxin] + H2O = (2E)-4-hydroxy-3-methylbut-2-enyl diphosphate + 2 reduced [2Fe-2S]-[ferredoxin] + 2 H(+). The enzyme catalyses dimethylallyl diphosphate + 2 oxidized [2Fe-2S]-[ferredoxin] + H2O = (2E)-4-hydroxy-3-methylbut-2-enyl diphosphate + 2 reduced [2Fe-2S]-[ferredoxin] + 2 H(+). It participates in isoprenoid biosynthesis; dimethylallyl diphosphate biosynthesis; dimethylallyl diphosphate from (2E)-4-hydroxy-3-methylbutenyl diphosphate: step 1/1. It functions in the pathway isoprenoid biosynthesis; isopentenyl diphosphate biosynthesis via DXP pathway; isopentenyl diphosphate from 1-deoxy-D-xylulose 5-phosphate: step 6/6. Its function is as follows. Catalyzes the conversion of 1-hydroxy-2-methyl-2-(E)-butenyl 4-diphosphate (HMBPP) into a mixture of isopentenyl diphosphate (IPP) and dimethylallyl diphosphate (DMAPP). Acts in the terminal step of the DOXP/MEP pathway for isoprenoid precursor biosynthesis. This Francisella tularensis subsp. mediasiatica (strain FSC147) protein is 4-hydroxy-3-methylbut-2-enyl diphosphate reductase.